The sequence spans 339 residues: Diacylglycerol acyltransferase/mycolyltransferase Ag85A (339 aa).

An N-terminal signal peptide occupies residues Met-1–Ala-43. Met-85–Arg-86 provides a ligand contact to substrate. The fibronectin-binding stretch occupies residues Phe-101–Val-111. A disulfide bridge links Cys-130 with Cys-135. The substrate site is built by Ser-169 and Asp-197. Ser-169 functions as the Nucleophile in the catalytic mechanism. The active site involves Glu-272. Substrate is bound by residues Phe-274 to Thr-277, Lys-281, and His-304 to Trp-306. Residue His-304 is part of the active site.

The protein belongs to the mycobacterial A85 antigen family. Homodimer.

Its subcellular location is the secreted. It localises to the cell wall. The protein resides in the cytoplasm. It catalyses the reaction an acyl-CoA + a 1,2-diacyl-sn-glycerol = a triacyl-sn-glycerol + CoA. The enzyme catalyses 2 alpha,alpha'-trehalose 6-mycolate = alpha,alpha'-trehalose 6,6'-bismycolate + alpha,alpha-trehalose. Functionally, the antigen 85 proteins (FbpA, FbpB, FbpC) are responsible for the high affinity of mycobacteria for fibronectin, a large adhesive glycoprotein, which facilitates the attachment of M.tuberculosis to murine alveolar macrophages (AMs). They also help to maintain the integrity of the cell wall by catalyzing the transfer of mycolic acids to cell wall arabinogalactan, and through the synthesis of alpha,alpha-trehalose dimycolate (TDM, cord factor). They catalyze the transfer of a mycoloyl residue from one molecule of alpha,alpha-trehalose monomycolate (TMM) to another TMM, leading to the formation of TDM. FbpA mediates triacylglycerol (TAG) formation with long-chain acyl-CoA as the acyl donor and 1,2-dipalmitoyl-sn-glycerol (1,2-dipalmitin) as the acyl acceptor. It has a preference for C26:0-CoA over C18:1-CoA. The protein is Diacylglycerol acyltransferase/mycolyltransferase Ag85A (fbpA) of Mycobacterium gordonae.